A 125-amino-acid polypeptide reads, in one-letter code: MADLQKIVDDLSSLTVLEAAELAKLLEEKWGVSAAAAVAVAAPGGGGAAAAPAEEKTEFTVVLASAGDKKIEVIKEVRAITGLGLKEAKDLVEGAPKPVKEGVNKEEAEKIKGQLEKAGAKVELK.

It belongs to the bacterial ribosomal protein bL12 family. In terms of assembly, homodimer. Part of the ribosomal stalk of the 50S ribosomal subunit. Forms a multimeric L10(L12)X complex, where L10 forms an elongated spine to which 2 to 4 L12 dimers bind in a sequential fashion. Binds GTP-bound translation factors.

Functionally, forms part of the ribosomal stalk which helps the ribosome interact with GTP-bound translation factors. Is thus essential for accurate translation. This chain is Large ribosomal subunit protein bL12, found in Bradyrhizobium sp. (strain ORS 278).